The sequence spans 99 residues: Malonate decarboxylase acyl carrier protein (99 aa).

Ser-25 is subject to O-(phosphoribosyl dephospho-coenzyme A)serine.

Belongs to the MdcC family. In terms of processing, covalently binds the prosthetic group of malonate decarboxylase.

The protein localises to the cytoplasm. Subunit of malonate decarboxylase, it is an acyl carrier protein to which acetyl and malonyl thioester residues are bound via a 2'-(5''-phosphoribosyl)-3'-dephospho-CoA prosthetic group and turn over during the catalytic mechanism. This is Malonate decarboxylase acyl carrier protein from Pseudomonas fluorescens (strain ATCC BAA-477 / NRRL B-23932 / Pf-5).